A 706-amino-acid polypeptide reads, in one-letter code: Termination factor NPH-I homolog (706 aa).

A Helicase ATP-binding domain is found at 62-227; that stretch reads IGQGENTRGL…VPCFNMLSGR (166 aa). 75-82 contacts ATP; sequence HQMGMGKT. Residues 168–171 carry the DEAH box motif; the sequence is DEAH. A Helicase C-terminal domain is found at 417–599; that stretch reads QCLQPLKVLE…HLNSAFRDLL (183 aa).

The protein belongs to the DEAD box helicase family. DEAH subfamily. In terms of assembly, part of the viral DNA-directed RNA polymerase that consists of 8 polII-like subunits (RPB1, RPB2, RPB3, RPB5, RPB6, RPB7, RPB9, RPB10), a capping enzyme and a termination factor.

Its subcellular location is the virion. Putative DNA-dependent ATPase required for providing the needed energy to achieve the termination of early transcripts. This chain is Termination factor NPH-I homolog, found in Ornithodoros (relapsing fever ticks).